Here is a 309-residue protein sequence, read N- to C-terminus: Probable manganese-dependent inorganic pyrophosphatase (309 aa).

Mn(2+) is bound by residues His9, Asp13, Asp15, Asp75, His97, and Asp149.

This sequence belongs to the PPase class C family. Mn(2+) serves as cofactor.

The protein localises to the cytoplasm. The catalysed reaction is diphosphate + H2O = 2 phosphate + H(+). The chain is Probable manganese-dependent inorganic pyrophosphatase from Exiguobacterium sp. (strain ATCC BAA-1283 / AT1b).